We begin with the raw amino-acid sequence, 749 residues long: Basic juvenile hormone-suppressible protein 2 (749 aa).

An N-terminal signal peptide occupies residues 1–14 (MRAVLLFVVSLAAL).

This sequence belongs to the hemocyanin family. Fat body, and hemolymph of larvae.

This Trichoplusia ni (Cabbage looper) protein is Basic juvenile hormone-suppressible protein 2 (BJSP-2).